A 418-amino-acid polypeptide reads, in one-letter code: Glutamyl-tRNA reductase (418 aa).

Substrate contacts are provided by residues 49–52 (TCNR), Ser109, 114–116 (EPQ), and Gln120. Catalysis depends on Cys50, which acts as the Nucleophile. An NADP(+)-binding site is contributed by 189–194 (GAGETI).

The protein belongs to the glutamyl-tRNA reductase family. Homodimer.

The enzyme catalyses (S)-4-amino-5-oxopentanoate + tRNA(Glu) + NADP(+) = L-glutamyl-tRNA(Glu) + NADPH + H(+). Its pathway is porphyrin-containing compound metabolism; protoporphyrin-IX biosynthesis; 5-aminolevulinate from L-glutamyl-tRNA(Glu): step 1/2. In terms of biological role, catalyzes the NADPH-dependent reduction of glutamyl-tRNA(Glu) to glutamate 1-semialdehyde (GSA). The protein is Glutamyl-tRNA reductase of Escherichia coli O9:H4 (strain HS).